A 286-amino-acid chain; its full sequence is Shikimate dehydrogenase (NADP(+)) (286 aa).

Shikimate is bound by residues 20 to 22 and T67; that span reads SLS. The Proton acceptor role is filled by K71. Positions 92 and 107 each coordinate shikimate. Residues 132–136 and M228 each bind NADP(+); that span reads GAGGA. Shikimate is bound at residue Y230. G251 provides a ligand contact to NADP(+).

The protein belongs to the shikimate dehydrogenase family. As to quaternary structure, homodimer.

It carries out the reaction shikimate + NADP(+) = 3-dehydroshikimate + NADPH + H(+). It functions in the pathway metabolic intermediate biosynthesis; chorismate biosynthesis; chorismate from D-erythrose 4-phosphate and phosphoenolpyruvate: step 4/7. Functionally, involved in the biosynthesis of the chorismate, which leads to the biosynthesis of aromatic amino acids. Catalyzes the reversible NADPH linked reduction of 3-dehydroshikimate (DHSA) to yield shikimate (SA). The sequence is that of Shikimate dehydrogenase (NADP(+)) from Geobacter sulfurreducens (strain ATCC 51573 / DSM 12127 / PCA).